A 299-amino-acid chain; its full sequence is Probable lipid kinase YegS (299 aa).

In terms of domain architecture, DAGKc spans 2 to 133; sequence AEFPASLLIL…IDMAQVNKQT (132 aa). Residues Thr-40, 66–72, and Thr-95 each bind ATP; that span reads GDGTINE. Residues Leu-215, Asp-218, and Leu-220 each contribute to the Mg(2+) site. The active-site Proton acceptor is Glu-271.

The protein belongs to the diacylglycerol/lipid kinase family. YegS lipid kinase subfamily. The cofactor is Mg(2+). Requires Ca(2+) as cofactor.

The protein resides in the cytoplasm. Probably phosphorylates lipids; the in vivo substrate is unknown. The polypeptide is Probable lipid kinase YegS (Escherichia coli O9:H4 (strain HS)).